Reading from the N-terminus, the 105-residue chain is Heat shock protein HspQ (105 aa).

A disordered region spans residues 75 to 105 (GEAQEAHPEQPSLDELAESIRHQLQAPRLRN).

The protein belongs to the HspQ family.

It localises to the cytoplasm. In terms of biological role, involved in the degradation of certain denaturated proteins, including DnaA, during heat shock stress. The polypeptide is Heat shock protein HspQ (Serratia proteamaculans (strain 568)).